The chain runs to 1407 residues: Clustered mitochondria protein (1407 aa).

The segment covering 1–12 (MAGKSNKSKAKR) has biased composition (basic residues). Disordered regions lie at residues 1–36 (MAGK…PVAA) and 83–103 (IPKA…PKQG). Positions 14 to 24 (AQSTTTNSTTD) are enriched in polar residues. Residues 384-670 (PDHKRDAARA…RVTPRDANYT (287 aa)) enclose the Clu domain. The disordered stretch occupies residues 724–760 (IDGEANGASNSDQKSISDKQNTTAEDYAAGSSESSKS). Polar residues predominate over residues 730-747 (GASNSDQKSISDKQNTTA). 5 TPR repeats span residues 1025–1058 (AKDL…LQQV), 1067–1100 (ANCC…NERC), 1109–1142 (AHSY…LGLS), 1151–1184 (AATF…NERL), and 1193–1226 (AVCY…LVKQ). The segment at 1358–1407 (VSSEKGGENGEAKVQEKKESSENGKTENLAPAGLGAGLTSLDKKKQKAKK) is disordered. The segment covering 1362–1382 (KGGENGEAKVQEKKESSENGK) has biased composition (basic and acidic residues).

The protein belongs to the CLU family.

Its subcellular location is the cytoplasm. MRNA-binding protein involved in proper cytoplasmic distribution of mitochondria. Together with REC2, REC3 and FMT/CLU, contributes to the establishment of the cellular volume devoted to the chloroplast compartment. In Arabidopsis thaliana (Mouse-ear cress), this protein is Clustered mitochondria protein.